The following is a 93-amino-acid chain: Phosphocarrier protein HPr (93 aa).

Positions 2-89 constitute an HPr domain; it reads AERRVNVGWA…KLVAEGLEEL (88 aa). His-15 functions as the Pros-phosphohistidine intermediate in the catalytic mechanism.

Belongs to the HPr family.

It is found in the cytoplasm. General (non sugar-specific) component of the phosphoenolpyruvate-dependent sugar phosphotransferase system (sugar PTS). This major carbohydrate active-transport system catalyzes the phosphorylation of incoming sugar substrates concomitantly with their translocation across the cell membrane. The phosphoryl group from phosphoenolpyruvate (PEP) is transferred to the phosphoryl carrier protein HPr by enzyme I. Phospho-HPr then transfers it to the PTS EIIA domain. This Streptomyces coelicolor (strain ATCC BAA-471 / A3(2) / M145) protein is Phosphocarrier protein HPr (ptsH).